The primary structure comprises 163 residues: Phosphopantetheine adenylyltransferase (163 aa).

Residue Thr10 participates in substrate binding. ATP is bound by residues Thr10 to Phe11 and His18. Residues Lys42, Leu74, and Arg88 each contribute to the substrate site. Residues Gly89–Arg91, Glu99, and Asn124–Thr130 each bind ATP.

It belongs to the bacterial CoaD family. Homohexamer. It depends on Mg(2+) as a cofactor.

The protein resides in the cytoplasm. It catalyses the reaction (R)-4'-phosphopantetheine + ATP + H(+) = 3'-dephospho-CoA + diphosphate. It functions in the pathway cofactor biosynthesis; coenzyme A biosynthesis; CoA from (R)-pantothenate: step 4/5. Its function is as follows. Reversibly transfers an adenylyl group from ATP to 4'-phosphopantetheine, yielding dephospho-CoA (dPCoA) and pyrophosphate. In Shewanella sp. (strain W3-18-1), this protein is Phosphopantetheine adenylyltransferase.